The primary structure comprises 284 residues: Acetylglutamate kinase (284 aa).

Residues 64-65 (GG), Arg86, and Asn181 contribute to the substrate site.

Belongs to the acetylglutamate kinase family. ArgB subfamily.

It is found in the cytoplasm. It carries out the reaction N-acetyl-L-glutamate + ATP = N-acetyl-L-glutamyl 5-phosphate + ADP. Its pathway is amino-acid biosynthesis; L-arginine biosynthesis; N(2)-acetyl-L-ornithine from L-glutamate: step 2/4. Its function is as follows. Catalyzes the ATP-dependent phosphorylation of N-acetyl-L-glutamate. This Wolinella succinogenes (strain ATCC 29543 / DSM 1740 / CCUG 13145 / JCM 31913 / LMG 7466 / NCTC 11488 / FDC 602W) (Vibrio succinogenes) protein is Acetylglutamate kinase.